Here is a 108-residue protein sequence, read N- to C-terminus: Mitochondrial pyruvate carrier 3 (108 aa).

Helical transmembrane passes span 19–35 (IHFW…IANI), 51–67 (IVIT…STVI), and 74–90 (LFSV…YQLT).

This sequence belongs to the mitochondrial pyruvate carrier (MPC) (TC 2.A.105) family. Abundant in leaf and particularly in the guard cells.

It is found in the mitochondrion. The protein resides in the mitochondrion inner membrane. Functionally, mediates the uptake of pyruvate into mitochondria. Negatively regulates ABA-induced guard cell signaling and mediates drought stress responses. In Arabidopsis thaliana (Mouse-ear cress), this protein is Mitochondrial pyruvate carrier 3.